The sequence spans 151 residues: Large ribosomal subunit protein bL9 (151 aa).

Belongs to the bacterial ribosomal protein bL9 family.

Binds to the 23S rRNA. In Desulfotalea psychrophila (strain LSv54 / DSM 12343), this protein is Large ribosomal subunit protein bL9.